The following is a 540-amino-acid chain: Probable protein kinase UbiB (540 aa).

A helical transmembrane segment spans residues 24–44; the sequence is LLFDQPLLPWWLASLRLLMPW. The 369-residue stretch at 126–494 folds into the Protein kinase domain; sequence RFDVEPLASA…RRRQGDRWAL (369 aa). ATP is bound by residues 132–140 and lysine 154; that span reads LASASVAQV. The Proton acceptor role is filled by aspartate 289. Transmembrane regions (helical) follow at residues 496-516 and 518-538; these read LLGAGLLGGGAVLAAGAAETA and LAAPAAWPAWLMLAAGLYLIV.

This sequence belongs to the ABC1 family. UbiB subfamily.

It is found in the cell inner membrane. Its pathway is cofactor biosynthesis; ubiquinone biosynthesis [regulation]. Its function is as follows. Is probably a protein kinase regulator of UbiI activity which is involved in aerobic coenzyme Q (ubiquinone) biosynthesis. This Pseudomonas putida (strain ATCC 700007 / DSM 6899 / JCM 31910 / BCRC 17059 / LMG 24140 / F1) protein is Probable protein kinase UbiB.